A 379-amino-acid polypeptide reads, in one-letter code: Tubby-like F-box protein 7 (379 aa).

Residues 18–28 (FHQGETTTAPE) show a composition bias toward polar residues. The segment at 18-41 (FHQGETTTAPESESIPPPSNMAGS) is disordered. Positions 42 to 97 (SSWSAMLPELLGEIIRRVEETEDRWPQRRDVVTCACVSKKWREITHDFARSSLNSG) constitute an F-box domain. Disordered stretches follow at residues 193–212 (SQPPHNGAKPSNGKASRRFA) and 248–278 (TLRCPSPSPSSSSAGLSSDQKPCDVTKIMKK).

The protein belongs to the TUB family. Ubiquitous.

This chain is Tubby-like F-box protein 7, found in Arabidopsis thaliana (Mouse-ear cress).